A 1668-amino-acid polypeptide reads, in one-letter code: DNA polymerase (1668 aa).

DOD-type homing endonuclease domains are found at residues 739-872 and 1191-1330; these read LLGY…SLGV and LIGL…LVGV.

It belongs to the DNA polymerase type-B family. In terms of processing, this protein undergoes a protein self splicing that involves a post-translational excision of the intervening region (intein) followed by peptide ligation.

The enzyme catalyses DNA(n) + a 2'-deoxyribonucleoside 5'-triphosphate = DNA(n+1) + diphosphate. Functionally, in addition to polymerase activity, this DNA polymerase exhibits 3' to 5' exonuclease activity. In terms of biological role, PI-ThyI and PI-ThyII are endonucleases. PI-ThyI cleaves the inteinless sequence of the Thy DNA pol gene. It requires a 21-bp minimal recognition sequence. The protein is DNA polymerase (pol) of Thermococcus hydrothermalis.